A 213-amino-acid polypeptide reads, in one-letter code: Major fimbrial subunit (213 aa).

The first 20 residues, 1 to 20, serve as a signal peptide directing secretion; it reads MKKTLLGSLILLAFAGNVQA. Cys41 and Cys81 form a disulfide bridge.

The protein belongs to the fimbrial protein family.

Its subcellular location is the fimbrium. Mediates adherence to oropharyngeal epithelial cells. Helps the airway colonization process. This is Major fimbrial subunit (hifA) from Haemophilus influenzae.